Reading from the N-terminus, the 345-residue chain is Inositol 2-dehydrogenase (345 aa).

The protein belongs to the Gfo/Idh/MocA family. In terms of assembly, homotetramer.

It carries out the reaction myo-inositol + NAD(+) = scyllo-inosose + NADH + H(+). Functionally, involved in the oxidation of myo-inositol (MI) to 2-keto-myo-inositol (2KMI or 2-inosose). This chain is Inositol 2-dehydrogenase, found in Mycolicibacterium smegmatis (strain ATCC 700084 / mc(2)155) (Mycobacterium smegmatis).